Reading from the N-terminus, the 1072-residue chain is Dyslexia-associated protein KIAA0319 (1072 aa).

The N-terminal stretch at 1-20 (MAPPTGVLSSLLLLVTIAGC) is a signal peptide. One can recognise an MANSC domain in the interval 21-99 (ARKQCSEGRT…PKKMGPIRSY (79 aa)). The Extracellular segment spans residues 21–955 (ARKQCSEGRT…WDGESNCEWS (935 aa)). 2 disordered regions span residues 168 to 277 (LQPS…SLPP) and 295 to 327 (VTPG…SPTT). Asparagine 196, asparagine 219, and asparagine 262 each carry an N-linked (GlcNAc...) asparagine glycan. Polar residues predominate over residues 254–265 (SQLQEQSSNSSG). Positions 311–320 (AAPSESTPSE) are enriched in low complexity. 5 PKD domains span residues 341-427 (DNLI…VKPA), 435-524 (VAVV…VNNA), 530-620 (VANA…VQPE), 621-714 (NNRP…VKKE), and 720-811 (RARA…VQPD). N-linked (GlcNAc...) asparagine glycans are attached at residues asparagine 394, asparagine 421, asparagine 498, asparagine 513, asparagine 536, and asparagine 551. A glycan (N-linked (GlcNAc...) asparagine) is linked at asparagine 733. Residues 956–976 (IFYVTVLAFTLIVLTGGFTWL) traverse the membrane as a helical segment. Residues 977–1072 (CICCCKRQKR…ASFSYCSKDR (96 aa)) lie on the Cytoplasmic side of the membrane. Positions 995-998 (YTIL) match the Endocytosis signal motif. The segment at 1045–1072 (KMERGNPKVSMNGSIRNGASFSYCSKDR) is disordered. A compositionally biased stretch (polar residues) spans 1053-1072 (VSMNGSIRNGASFSYCSKDR).

In terms of assembly, homodimer. Interacts with AP2M1; required for clathrin-mediated endocytosis. In terms of processing, N-glycosylated. Post-translationally, O-glycosylated. Shedding of the extracellular domain and intramembrane cleavage produce several proteolytic products. The intramembrane cleavage releases a soluble cytoplasmic polypeptide that translocates to the nucleolus. As to expression, detected in adult brain cortex and fetal frontal lobe (at protein level). Highly expressed in brain cortex, putamen, amygdala, hippocampus and cerebellum.

The protein localises to the cell membrane. The protein resides in the early endosome membrane. Its function is as follows. Involved in neuronal migration during development of the cerebral neocortex. May function in a cell autonomous and a non-cell autonomous manner and play a role in appropriate adhesion between migrating neurons and radial glial fibers. May also regulate growth and differentiation of dendrites. This chain is Dyslexia-associated protein KIAA0319 (KIAA0319), found in Homo sapiens (Human).